The following is a 236-amino-acid chain: DCN1-like protein 5 (236 aa).

Residues serine 9, serine 40, and serine 47 each carry the phosphoserine modification. A DCUN1 domain is found at 45–231 (FSSKKCLAWF…LLDEFVEWHK (187 aa)).

In terms of assembly, part of a complex that contains DCUN1D5, CUL1 and RBX1; this interaction is bridged by CUL1. Interacts (via the DCUN1 domain) with the unneddylated cullins: interacts with CUL1, CUL2, CUL3, CUL4A, CUL4B and CUL5; these interactions promote the cullin neddylation and the identity of the cullin dictates the affinity of the interaction. Interacts (via DCUN1 domain) with UBE2M (N-terminally acetylated form) and probably with UBE2F (N-terminally acetylated form). May also interact with regulators or subunits of cullin-RING ligases such as RBX1, RNF7, ELOB and DDB1; these interactions are bridged by cullins. Interacts with CAND1; this interaction is bridged by cullins and strongly inhibits the neddylation of cullins. These CAND-cullin-DCNL complexes can only be neddylated in the presence of a substrate adapter. In terms of processing, phosphorylation at Ser-40 is independent of cullin's interaction. Phosphorylated in response to both TICAM1 and MYD88 dependent Toll-like receptor (TLR) pathway activation. Phosphorylated in response to IL1B stimulation.

Its subcellular location is the nucleus. The protein localises to the cytoplasm. The protein resides in the cytoskeleton. It is found in the spindle. Its function is as follows. Contributes to the neddylation of all cullins by transferring NEDD8 from N-terminally acetylated NEDD8-conjugating E2s enzyme to different cullin C-terminal domain-RBX complexes which is necessary for the activation of cullin-RING E3 ubiquitin ligases (CRLs). May play a role in DNA damage response and may participate in cell proliferation and anchorage-independent cell growth. The sequence is that of DCN1-like protein 5 (DCUN1D5) from Bos taurus (Bovine).